Consider the following 156-residue polypeptide: 6,7-dimethyl-8-ribityllumazine synthase (156 aa).

5-amino-6-(D-ribitylamino)uracil is bound by residues Phe22, 57–59 (AYE), and 81–83 (SVI). Residue 86–87 (GT) coordinates (2S)-2-hydroxy-3-oxobutyl phosphate. His89 (proton donor) is an active-site residue. Phe114 contributes to the 5-amino-6-(D-ribitylamino)uracil binding site. A (2S)-2-hydroxy-3-oxobutyl phosphate-binding site is contributed by Arg128.

This sequence belongs to the DMRL synthase family. As to quaternary structure, forms an icosahedral capsid composed of 60 subunits, arranged as a dodecamer of pentamers.

The enzyme catalyses (2S)-2-hydroxy-3-oxobutyl phosphate + 5-amino-6-(D-ribitylamino)uracil = 6,7-dimethyl-8-(1-D-ribityl)lumazine + phosphate + 2 H2O + H(+). It participates in cofactor biosynthesis; riboflavin biosynthesis; riboflavin from 2-hydroxy-3-oxobutyl phosphate and 5-amino-6-(D-ribitylamino)uracil: step 1/2. Functionally, catalyzes the formation of 6,7-dimethyl-8-ribityllumazine by condensation of 5-amino-6-(D-ribitylamino)uracil with 3,4-dihydroxy-2-butanone 4-phosphate. This is the penultimate step in the biosynthesis of riboflavin. The chain is 6,7-dimethyl-8-ribityllumazine synthase from Photobacterium leiognathi.